The primary structure comprises 339 residues: Serine/threonine-protein kinase SRK2J (339 aa).

The 257-residue stretch at 4–260 (YEMVKDLGFG…LKEIKSHAWF (257 aa)) folds into the Protein kinase domain. ATP contacts are provided by residues 10-18 (LGFGNFGLA) and lysine 33. The Proton acceptor role is filled by aspartate 123. The tract at residues 308 to 339 (SRPVESLGSDKKDDDEEEYLDANDEEWYDDYA) is disordered. Acidic residues predominate over residues 320-339 (DDDEEEYLDANDEEWYDDYA).

Belongs to the protein kinase superfamily. Ser/Thr protein kinase family. Expressed in seedlings.

The enzyme catalyses L-seryl-[protein] + ATP = O-phospho-L-seryl-[protein] + ADP + H(+). It catalyses the reaction L-threonyl-[protein] + ATP = O-phospho-L-threonyl-[protein] + ADP + H(+). In Arabidopsis thaliana (Mouse-ear cress), this protein is Serine/threonine-protein kinase SRK2J (SRK2J).